The chain runs to 317 residues: ADP-L-glycero-D-manno-heptose-6-epimerase (317 aa).

Residues 10–11 (FI), 31–32 (DD), lysine 38, lysine 53, 75–79 (QGACS), and asparagine 92 contribute to the NADP(+) site. Residue tyrosine 139 is the Proton acceptor of the active site. Lysine 143 contacts NADP(+). Asparagine 166 provides a ligand contact to substrate. Residues valine 167 and lysine 175 each coordinate NADP(+). Lysine 175 (proton acceptor) is an active-site residue. Substrate is bound by residues glycine 177, histidine 184, 198-201 (FEGV), arginine 211, and tyrosine 275.

This sequence belongs to the NAD(P)-dependent epimerase/dehydratase family. HldD subfamily. As to quaternary structure, homopentamer. NADP(+) serves as cofactor.

It catalyses the reaction ADP-D-glycero-beta-D-manno-heptose = ADP-L-glycero-beta-D-manno-heptose. Its pathway is nucleotide-sugar biosynthesis; ADP-L-glycero-beta-D-manno-heptose biosynthesis; ADP-L-glycero-beta-D-manno-heptose from D-glycero-beta-D-manno-heptose 7-phosphate: step 4/4. In terms of biological role, catalyzes the interconversion between ADP-D-glycero-beta-D-manno-heptose and ADP-L-glycero-beta-D-manno-heptose via an epimerization at carbon 6 of the heptose. The protein is ADP-L-glycero-D-manno-heptose-6-epimerase of Shewanella piezotolerans (strain WP3 / JCM 13877).